Reading from the N-terminus, the 303-residue chain is Methionyl-tRNA formyltransferase (303 aa).

A (6S)-5,6,7,8-tetrahydrofolate-binding site is contributed by Ser-110–Pro-113.

This sequence belongs to the Fmt family.

The catalysed reaction is L-methionyl-tRNA(fMet) + (6R)-10-formyltetrahydrofolate = N-formyl-L-methionyl-tRNA(fMet) + (6S)-5,6,7,8-tetrahydrofolate + H(+). In terms of biological role, attaches a formyl group to the free amino group of methionyl-tRNA(fMet). The formyl group appears to play a dual role in the initiator identity of N-formylmethionyl-tRNA by promoting its recognition by IF2 and preventing the misappropriation of this tRNA by the elongation apparatus. This is Methionyl-tRNA formyltransferase from Ehrlichia ruminantium (strain Gardel).